A 322-amino-acid polypeptide reads, in one-letter code: tRNA (guanine-N(7)-)-methyltransferase (322 aa).

Glu-29, Glu-55, and Asp-105 together coordinate S-adenosyl-L-methionine. Residue Asp-105 is part of the active site. 2 residues coordinate substrate: Lys-109 and Asp-141.

Belongs to the class I-like SAM-binding methyltransferase superfamily. TrmB family.

It carries out the reaction guanosine(46) in tRNA + S-adenosyl-L-methionine = N(7)-methylguanosine(46) in tRNA + S-adenosyl-L-homocysteine. It functions in the pathway tRNA modification; N(7)-methylguanine-tRNA biosynthesis. In terms of biological role, catalyzes the formation of N(7)-methylguanine at position 46 (m7G46) in tRNA. The chain is tRNA (guanine-N(7)-)-methyltransferase from Deinococcus radiodurans (strain ATCC 13939 / DSM 20539 / JCM 16871 / CCUG 27074 / LMG 4051 / NBRC 15346 / NCIMB 9279 / VKM B-1422 / R1).